A 426-amino-acid chain; its full sequence is Serine--tRNA ligase (426 aa).

233–235 lines the L-serine pocket; the sequence is TSE. Residue 264–266 coordinates ATP; sequence RAE. Glutamate 287 lines the L-serine pocket. 351–354 contributes to the ATP binding site; that stretch reads EISS. Serine 387 contributes to the L-serine binding site.

The protein belongs to the class-II aminoacyl-tRNA synthetase family. Type-1 seryl-tRNA synthetase subfamily. As to quaternary structure, homodimer. The tRNA molecule binds across the dimer.

Its subcellular location is the cytoplasm. The catalysed reaction is tRNA(Ser) + L-serine + ATP = L-seryl-tRNA(Ser) + AMP + diphosphate + H(+). It carries out the reaction tRNA(Sec) + L-serine + ATP = L-seryl-tRNA(Sec) + AMP + diphosphate + H(+). It functions in the pathway aminoacyl-tRNA biosynthesis; selenocysteinyl-tRNA(Sec) biosynthesis; L-seryl-tRNA(Sec) from L-serine and tRNA(Sec): step 1/1. Its function is as follows. Catalyzes the attachment of serine to tRNA(Ser). Is also able to aminoacylate tRNA(Sec) with serine, to form the misacylated tRNA L-seryl-tRNA(Sec), which will be further converted into selenocysteinyl-tRNA(Sec). The sequence is that of Serine--tRNA ligase from Stenotrophomonas maltophilia (strain R551-3).